Consider the following 2225-residue polypeptide: Multifunctional protein CAD (2225 aa).

N-acetylalanine is present on A2. Residues 2–365 (AALVLEDGSV…TVKEATAGNP (364 aa)) form a GATase (Glutamine amidotransferase) region. The L-glutamine site is built by S44, G222, and G224. In terms of domain architecture, Glutamine amidotransferase type-1 spans 177-363 (RILALDCGLK…LETVKEATAG (187 aa)). C252 acts as the Nucleophile; for GATase activity in catalysis. L-glutamine contacts are provided by L253, Q256, N294, G296, and F297. Catalysis depends on for GATase activity residues H336 and E338. A linker region spans residues 366–394 (GGQTVRERLTERLCPPGIPTPGSGLPPPR). The segment at 395–933 (KVLILGSGGL…TTHDLTFRTP (539 aa)) is CPSase A. The tract at residues 395–1455 (KVLILGSGGL…APPLKVHVDC (1061 aa)) is CPSase (Carbamoyl phosphate synthase). T456 carries the post-translational modification Phosphothreonine; by MAPK1. ATP-binding residues include R515, R555, G561, G562, K592, E599, G625, I626, H627, Q668, and E682. Residues 519 to 711 (AARMAEIGEH…LAYVAAKLAL (193 aa)) enclose the ATP-grasp 1 domain. Mg(2+) contacts are provided by Q668, E682, and N684. The Mn(2+) site is built by Q668, E682, and N684. K747 carries the N6-acetyllysine modification. Positions 934–1455 (HVLVLGSGVY…APPLKVHVDC (522 aa)) are CPSase B. S1038 is modified (phosphoserine). Residues 1052–1243 (SRLLDTIGIS…LVALATRVIM (192 aa)) enclose the ATP-grasp 2 domain. ATP is bound by residues R1088, K1127, I1129, E1134, G1159, V1160, H1161, S1162, Q1202, and E1214. The Mg(2+) site is built by Q1202, E1214, and N1216. Mn(2+) is bound by residues Q1202, E1214, and N1216. The MGS-like domain maps to 1308-1462 (FKIPKKNILL…VDCMTSQKLV (155 aa)). Phosphoserine; by PKA is present on S1406. Position 1411 is an N6-acetyllysine (K1411). Positions 1456–1788 (MTSQKLVRLP…VKGTVRRVVL (333 aa)) are DHOase (dihydroorotase). Residues H1471 and H1473 each coordinate Zn(2+). (S)-dihydroorotate contacts are provided by R1475 and N1505. 5 residues coordinate Zn(2+): K1556, H1590, C1613, H1614, and E1637. K1556 bears the N6-carboxylysine mark. R1661 serves as a coordination point for (S)-dihydroorotate. A Zn(2+)-binding site is contributed by D1686. Residue D1686 is the For DHOase activity of the active site. (S)-dihydroorotate is bound by residues H1690 and P1702. A linker region spans residues 1789–1917 (RGEVAYIDGQ…GLLHPQTSPL (129 aa)). The disordered stretch occupies residues 1811-1899 (KWPQGAVPQL…YPPPPVPRQA (89 aa)). Residues 1825–1834 (PATSEMTTTP) show a composition bias toward polar residues. S1859 is subject to Phosphoserine; by RPS6KB1 and PKA. A compositionally biased stretch (basic and acidic residues) spans 1866–1878 (EEPKEKSSRKVAE). S1873 is modified (phosphoserine; by PKC; in vitro). T1884 carries the post-translational modification Phosphothreonine. 2 positions are modified to phosphoserine: S1900 and S1938. Positions 1918-2225 (LHSLVGQHIL…ALLATVLGRF (308 aa)) are ATCase (Aspartate transcarbamylase). The carbamoyl phosphate site is built by R1975 and T1976. Residue K2003 coordinates L-aspartate. Residues R2024, H2052, and Q2055 each contribute to the carbamoyl phosphate site. R2085 and R2146 together coordinate L-aspartate. Residues M2185 and P2186 each coordinate carbamoyl phosphate.

This sequence in the N-terminal section; belongs to the CarA family. The protein in the 2nd section; belongs to the CarB family. In the 3rd section; belongs to the metallo-dependent hydrolases superfamily. DHOase family. CAD subfamily. It in the C-terminal section; belongs to the aspartate/ornithine carbamoyltransferase superfamily. ATCase family. In terms of assembly, homohexamer. Interacts with CIPC. The cofactor is Zn(2+). Requires Mg(2+) as cofactor. Mn(2+) serves as cofactor. In terms of processing, activated by MAP kinase (Erk1/2) phosphorylation just prior to the S phase of the cell cycle, when the demand for pyrimidine nucleotides is greatest, and down-regulated as the cells emerge from S phase by protein kinase A (PKA) phosphorylation. Phosphorylation at Ser-1859 by RPS6KB1 downstream of MTOR promotes oligomerization and stimulates dihydroorotase activity. Phosphorylation at Ser-1406 reduces sensitivity to feedback inhibition by UTP.

Its subcellular location is the cytoplasm. The protein resides in the nucleus. It catalyses the reaction hydrogencarbonate + L-glutamine + 2 ATP + H2O = carbamoyl phosphate + L-glutamate + 2 ADP + phosphate + 2 H(+). It carries out the reaction L-glutamine + H2O = L-glutamate + NH4(+). The catalysed reaction is hydrogencarbonate + NH4(+) + 2 ATP = carbamoyl phosphate + 2 ADP + phosphate + 2 H(+). The enzyme catalyses carbamoyl phosphate + L-aspartate = N-carbamoyl-L-aspartate + phosphate + H(+). It catalyses the reaction (S)-dihydroorotate + H2O = N-carbamoyl-L-aspartate + H(+). It participates in pyrimidine metabolism; UMP biosynthesis via de novo pathway; (S)-dihydroorotate from bicarbonate: step 1/3. The protein operates within pyrimidine metabolism; UMP biosynthesis via de novo pathway; (S)-dihydroorotate from bicarbonate: step 2/3. Its pathway is pyrimidine metabolism; UMP biosynthesis via de novo pathway; (S)-dihydroorotate from bicarbonate: step 3/3. Its activity is regulated as follows. Allosterically regulated and controlled by phosphorylation. 5-phosphoribose 1-diphosphate (PRPP) is an activator while UMP and UTP are inhibitors of the CPSase reaction. Multifunctional protein that encodes the first 3 enzymatic activities of the de novo pyrimidine pathway: carbamoylphosphate synthetase (CPSase; EC 6.3.5.5), aspartate transcarbamylase (ATCase; EC 2.1.3.2) and dihydroorotase (DHOase; EC 3.5.2.3). The CPSase-function is accomplished in 2 steps, by a glutamine-dependent amidotransferase activity (GATase) that binds and cleaves glutamine to produce ammonia, followed by an ammonium-dependent carbamoyl phosphate synthetase, which reacts with the ammonia, hydrogencarbonate and ATP to form carbamoyl phosphate. The endogenously produced carbamoyl phosphate is sequestered and channeled to the ATCase active site. ATCase then catalyzes the formation of carbamoyl-L-aspartate from L-aspartate and carbamoyl phosphate. In the last step, DHOase catalyzes the cyclization of carbamoyl aspartate to dihydroorotate. The polypeptide is Multifunctional protein CAD (Homo sapiens (Human)).